The primary structure comprises 199 residues: NADH-quinone oxidoreductase subunit C (199 aa).

This sequence belongs to the complex I 30 kDa subunit family. In terms of assembly, NDH-1 is composed of 14 different subunits. Subunits NuoB, C, D, E, F, and G constitute the peripheral sector of the complex.

It is found in the cell inner membrane. The catalysed reaction is a quinone + NADH + 5 H(+)(in) = a quinol + NAD(+) + 4 H(+)(out). Functionally, NDH-1 shuttles electrons from NADH, via FMN and iron-sulfur (Fe-S) centers, to quinones in the respiratory chain. The immediate electron acceptor for the enzyme in this species is believed to be ubiquinone. Couples the redox reaction to proton translocation (for every two electrons transferred, four hydrogen ions are translocated across the cytoplasmic membrane), and thus conserves the redox energy in a proton gradient. The chain is NADH-quinone oxidoreductase subunit C from Leptothrix cholodnii (strain ATCC 51168 / LMG 8142 / SP-6) (Leptothrix discophora (strain SP-6)).